The primary structure comprises 456 residues: Argininosuccinate lyase (456 aa).

The protein belongs to the lyase 1 family. Argininosuccinate lyase subfamily.

It is found in the cytoplasm. It carries out the reaction 2-(N(omega)-L-arginino)succinate = fumarate + L-arginine. The protein operates within amino-acid biosynthesis; L-arginine biosynthesis; L-arginine from L-ornithine and carbamoyl phosphate: step 3/3. This Shewanella pealeana (strain ATCC 700345 / ANG-SQ1) protein is Argininosuccinate lyase.